A 64-amino-acid polypeptide reads, in one-letter code: Large ribosomal subunit protein bL28 (64 aa).

The interval 1 to 23 (MSKECYFTGRKTVSSNNRSHAMN) is disordered. Residues 11 to 23 (KTVSSNNRSHAMN) are compositionally biased toward polar residues.

Belongs to the bacterial ribosomal protein bL28 family.

The protein is Large ribosomal subunit protein bL28 of Lactococcus lactis subsp. cremoris (strain SK11).